Reading from the N-terminus, the 383-residue chain is Acetylornithine deacetylase (383 aa).

Histidine 80 contributes to the Zn(2+) binding site. Aspartate 82 is a catalytic residue. Aspartate 112 contacts Zn(2+). Glutamate 144 is an active-site residue. Zn(2+) is bound by residues glutamate 145, glutamate 169, and histidine 355.

It belongs to the peptidase M20A family. ArgE subfamily. As to quaternary structure, homodimer. Zn(2+) is required as a cofactor. Requires Co(2+) as cofactor. Glutathione serves as cofactor.

It is found in the cytoplasm. It carries out the reaction N(2)-acetyl-L-ornithine + H2O = L-ornithine + acetate. Its pathway is amino-acid biosynthesis; L-arginine biosynthesis; L-ornithine from N(2)-acetyl-L-ornithine (linear): step 1/1. Catalyzes the hydrolysis of the amide bond of N(2)-acetylated L-amino acids. Cleaves the acetyl group from N-acetyl-L-ornithine to form L-ornithine, an intermediate in L-arginine biosynthesis pathway, and a branchpoint in the synthesis of polyamines. This chain is Acetylornithine deacetylase, found in Escherichia coli O45:K1 (strain S88 / ExPEC).